The following is a 109-amino-acid chain: Set1 complex component sdc1 (109 aa).

The tract at residues 49 to 109 (QQKQKEIVNQ…SSNPGKNSAS (61 aa)) is disordered. The span at 73–87 (STPTMAEQVQTSFSN) shows a compositional bias: polar residues. Positions 88–101 (PASTPLTQTSSPSS) are enriched in low complexity.

The protein belongs to the dpy-30 family. As to quaternary structure, component of the COMPASS (Set1C) complex composed of ash2, sdc1, set1, shg1, spp1, swd1, swd2 and swd3. Component of the Lid2 complex composed of ash2, jmj3, lid2, sdc1 and snt2.

Its subcellular location is the nucleus. Its function is as follows. The COMPASS (Set1C) complex specifically mono-, di- and trimethylates histone H3 to form H3K4me1/2/3, which subsequently activates gene expression by regulating transcription elongation and plays a role in telomere length maintenance. The polypeptide is Set1 complex component sdc1 (sdc1) (Schizosaccharomyces pombe (strain 972 / ATCC 24843) (Fission yeast)).